A 441-amino-acid chain; its full sequence is GTPase Der (441 aa).

2 EngA-type G domains span residues 4–169 (SIVA…PPEA) and 178–353 (PRIA…QNRN). GTP-binding positions include 10 to 17 (GRPNVGKS), 57 to 61 (DTGGI), 120 to 123 (NKVD), 184 to 191 (GKPNVGKS), 231 to 235 (DTAGL), and 296 to 299 (NKWD). Residues 354–438 (LRISTGVLNE…SLKFFIRERK (85 aa)) form the KH-like domain.

It belongs to the TRAFAC class TrmE-Era-EngA-EngB-Septin-like GTPase superfamily. EngA (Der) GTPase family. In terms of assembly, associates with the 50S ribosomal subunit.

Functionally, GTPase that plays an essential role in the late steps of ribosome biogenesis. The chain is GTPase Der from Lachnoclostridium phytofermentans (strain ATCC 700394 / DSM 18823 / ISDg) (Clostridium phytofermentans).